The chain runs to 730 residues: ABC transporter G family member 3 (730 aa).

The segment covering 1–28 has biased composition (low complexity); the sequence is MEEIQSQSDLYRSSSSSASSPTSRVPSS. Positions 1 to 100 are disordered; it reads MEEIQSQSDL…MASPPVPEGG (100 aa). Residues 47–56 are compositionally biased toward acidic residues; it reads DSPEWEDTPD. Positions 72–91 are enriched in polar residues; it reads NDATTTPVSPSLSKMNSGSM. Ser93 is modified (phosphoserine). An ABC transporter domain is found at 114–356; the sequence is IAWKDLTVTM…FSNAGFPCPI (243 aa). 151–158 is an ATP binding site; the sequence is GPAKSGKS. Residues 441-653 form the ABC transmembrane type-2 domain; it reads TRVAVLTWRS…SIEGLLENEY (213 aa). The next 6 helical transmembrane spans lie at 465-485, 495-515, 532-552, 575-595, 600-620, and 689-709; these read LILY…LGHS, AVFV…PSLL, AFVF…LMSI, VLNF…IACI, YWST…AGHF, and MLVL…LLRF.

This sequence belongs to the ABC transporter superfamily. ABCG family. Eye pigment precursor importer (TC 3.A.1.204) subfamily.

It is found in the membrane. The protein is ABC transporter G family member 3 (ABCG3) of Arabidopsis thaliana (Mouse-ear cress).